The primary structure comprises 170 residues: Cathelicidin antimicrobial peptide (170 aa).

A signal peptide spans 1-30 (MKTQRHGPSLGRWSLVLLLLGLVMPLAIVA). A propeptide spans 31–131 (QVLSYQEAVL…DISCDKDNRR (101 aa)) (cathelin-like domain (CLD)). 2 disulfide bridges follow: cysteine 86–cysteine 97 and cysteine 108–cysteine 125. The active core stretch occupies residues 150–162 (LKKIGQKIKDFLG).

The protein belongs to the cathelicidin family. Monomer, homodimer or homotrimer (in vitro). Oligomerizes as tetra- or hexamer in solution (in vitro). In terms of processing, proteolytically cleaved by proteinase PRTN3 into antibacterial peptide LL-37. Proteolytically cleaved by cathepsin CTSG and neutrophil elastase ELANE. Post-translationally, resistant to proteolytic degradation in solution, and when bound to both zwitterionic (mimicking mammalian membranes) and negatively charged membranes (mimicking bacterial membranes). After secretion onto the skin surface, the CAMP gene product is processed by a serine protease-dependent mechanism into multiple novel antimicrobial peptides distinct from and shorter than cathelicidin LL-37. These peptides show enhanced antimicrobial action, acquiring the ability to kill skin pathogens such as S.aureus, E.coli and C.albicans. These peptides have lost the ability to stimulate CXCL8/IL8 release from keratinocytes. The peptides act synergistically, killing bacteria at lower concentrations when present together, and maintain activity at increased salt condition.

The protein localises to the secreted. It is found in the vesicle. In terms of biological role, antimicrobial protein that is an integral component of the innate immune system. Binds to bacterial lipopolysaccharides (LPS). Acts via neutrophil N-formyl peptide receptors to enhance the release of CXCL2. Postsecretory processing generates multiple cathelicidin antimicrobial peptides with various lengths which act as a topical antimicrobial defense in sweat on skin. The unprocessed precursor form, cathelicidin antimicrobial peptide, inhibits the growth of Gram-negative E.coli and E.aerogenes with efficiencies comparable to that of the mature peptide LL-37 (in vitro). Functionally, antimicrobial peptide that is an integral component of the innate immune system. Binds to bacterial lipopolysaccharides (LPS). Causes membrane permeabilization by forming transmembrane pores (in vitro). Causes lysis of E.coli. Exhibits antimicrobial activity against Gram-negative bacteria such as P.aeruginosa, S.typhimurium, E.aerogenes, E.coli and P.syringae, Gram-positive bacteria such as L.monocytogenes, S.epidermidis, S.pyogenes and S.aureus, as well as vancomycin-resistant enterococci (in vitro). Exhibits antimicrobial activity against methicillin-resistant S.aureus, P.mirabilis, and C.albicans in low-salt media, but not in media containing 100 mM NaCl (in vitro). Forms chiral supramolecular assemblies with quinolone signal (PQS) molecules of P.aeruginosa, which may lead to interference of bacterial quorum signaling and perturbance of bacterial biofilm formation. May form supramolecular fiber-like assemblies on bacterial membranes. Induces cytokine and chemokine producation as well as TNF/TNFA and CSF2/GMCSF production in normal human keratinocytes. Exhibits hemolytic activity against red blood cells. Exhibits antimicrobial activity against E.coli and B.megaterium (in vitro). The protein is Cathelicidin antimicrobial peptide of Trachypithecus obscurus (Dusky leaf-monkey).